Here is a 71-residue protein sequence, read N- to C-terminus: Prokaryotic ubiquitin-like protein Pup (71 aa).

Positions 1–18 (MPEKDTGGQHRATRRTEE) are enriched in basic and acidic residues. The tract at residues 1–36 (MPEKDTGGQHRATRRTEEHDETIDEATATSDVQERR) is disordered. The interval 27–65 (TATSDVQERREKLDADVDAILDEIDDVLEENAEEFVRSY) is ARC ATPase binding. Residues 30–59 (SDVQERREKLDADVDAILDEIDDVLEENAE) are a coiled coil. Glutamate 71 participates in a covalent cross-link: Isoglutamyl lysine isopeptide (Glu-Lys) (interchain with K-? in acceptor proteins).

It belongs to the prokaryotic ubiquitin-like protein family. Strongly interacts with the proteasome-associated ATPase ARC through a hydrophobic interface; the interacting region of Pup lies in its C-terminal half. There is one Pup binding site per ARC hexamer ring.

It participates in protein degradation; proteasomal Pup-dependent pathway. Its function is as follows. Protein modifier that is covalently attached to lysine residues of substrate proteins, thereby targeting them for proteasomal degradation. The tagging system is termed pupylation. The sequence is that of Prokaryotic ubiquitin-like protein Pup from Acidothermus cellulolyticus (strain ATCC 43068 / DSM 8971 / 11B).